We begin with the raw amino-acid sequence, 155 residues long: SsrA-binding protein (155 aa).

It belongs to the SmpB family.

Its subcellular location is the cytoplasm. Its function is as follows. Required for rescue of stalled ribosomes mediated by trans-translation. Binds to transfer-messenger RNA (tmRNA), required for stable association of tmRNA with ribosomes. tmRNA and SmpB together mimic tRNA shape, replacing the anticodon stem-loop with SmpB. tmRNA is encoded by the ssrA gene; the 2 termini fold to resemble tRNA(Ala) and it encodes a 'tag peptide', a short internal open reading frame. During trans-translation Ala-aminoacylated tmRNA acts like a tRNA, entering the A-site of stalled ribosomes, displacing the stalled mRNA. The ribosome then switches to translate the ORF on the tmRNA; the nascent peptide is terminated with the 'tag peptide' encoded by the tmRNA and targeted for degradation. The ribosome is freed to recommence translation, which seems to be the essential function of trans-translation. The protein is SsrA-binding protein of Streptococcus sanguinis (strain SK36).